The sequence spans 1092 residues: Leukemia inhibitory factor receptor (1092 aa).

Positions 1 to 43 are cleaved as a signal peptide; sequence MAAYSWWRQPSWMVDNKRSRMTPNLPWLLSALTLLHLTMHANG. At 44-828 the chain is on the extracellular side; that stretch reads LKRGVQDLKC…SMFVVTKENS (785 aa). A Fibronectin type-III 1 domain is found at 45 to 126; the sequence is KRGVQDLKCT…QSKFTLNEKD (82 aa). Cystine bridges form between Cys53-Cys63 and Cys80-Cys88. N-linked (GlcNAc...) asparagine glycosylation is found at Asn164, Asn199, Asn238, and Asn261. Intrachain disulfides connect Cys208-Cys265 and Cys336-Cys346. Fibronectin type-III domains lie at 330–429, 430–529, 533–624, 622–714, and 719–828; these read VPQK…VAPH, DPTS…TEAT, GPDT…IPND, PNDD…IGYV, and PIVA…KENS. 6 N-linked (GlcNAc...) asparagine glycosylation sites follow: Asn385, Asn402, Asn421, Asn440, Asn453, and Asn476. Cys461 and Cys506 are oxidised to a cystine. The short motif at 514–518 is the WSXWS motif element; that stretch reads WSRWS. N-linked (GlcNAc...) asparagine glycosylation is found at Asn567, Asn647, Asn658, Asn675, Asn724, and Asn782. A helical transmembrane segment spans residues 829 to 853; that stretch reads VGLIIAILIPVAVAVIVGVVTSILC. Over 854 to 1092 the chain is Cytoplasmic; sequence YRKREWIKET…TNFFQNKPND (239 aa). A Box 1 motif motif is present at residues 864–872; that stretch reads FYPDIPNPE. A phosphoserine mark is found at Ser922 and Ser1039. The segment at 1009–1092 is disordered; the sequence is EDTAAEDEEG…TNFFQNKPND (84 aa). Composition is skewed to polar residues over residues 1027 to 1062 and 1081 to 1092; these read ANVNTWNLVSPDSPRSTDSNNEVVSFGSPCSINSRQ and SFTNFFQNKPND.

The protein belongs to the type I cytokine receptor family. Type 2 subfamily. As to quaternary structure, heterodimer composed of LIFR and IL6ST. The heterodimer formed by LIFR and IL6ST interacts with the complex formed by CNTF and CNTFR. Placenta, liver, kidney, heart, lung, brain, and embryos. The liver may be the primary site of synthesis of the secreted form.

It is found in the cell membrane. Its subcellular location is the secreted. Signal-transducing molecule. May have a common pathway with IL6ST. The soluble form inhibits the biological activity of LIF by blocking its binding to receptors on target cells. The sequence is that of Leukemia inhibitory factor receptor (Lifr) from Mus musculus (Mouse).